A 70-amino-acid polypeptide reads, in one-letter code: Testis-expressed protein 53 (70 aa).

In terms of tissue distribution, expressed in Testis.

The sequence is that of Testis-expressed protein 53 from Homo sapiens (Human).